Reading from the N-terminus, the 132-residue chain is Large ribosomal subunit protein uL14 (132 aa).

The protein belongs to the universal ribosomal protein uL14 family. Part of the 50S ribosomal subunit. Forms a cluster with proteins L3 and L24e, part of which may contact the 16S rRNA in 2 intersubunit bridges.

Functionally, binds to 23S rRNA. Forms part of two intersubunit bridges in the 70S ribosome. The sequence is that of Large ribosomal subunit protein uL14 from Methanococcus maripaludis (strain C5 / ATCC BAA-1333).